Here is a 419-residue protein sequence, read N- to C-terminus: Effector protein BipC (419 aa).

2 disordered regions span residues valine 62 to glycine 91 and leucine 338 to glutamine 402. Composition is skewed to basic and acidic residues over residues glutamate 71–glycine 91 and threonine 380–alanine 392.

This sequence belongs to the SctB/SipC family.

The protein resides in the secreted. The chain is Effector protein BipC (bipC) from Burkholderia mallei (strain NCTC 10247).